Consider the following 247-residue polypeptide: 2,3-bisphosphoglycerate-dependent phosphoglycerate mutase (247 aa).

Residues 8 to 15 (RHGESQWN), 21 to 22 (TG), arginine 60, 87 to 90 (ERHY), lysine 98, 114 to 115 (RR), and 183 to 184 (GN) contribute to the substrate site. Catalysis depends on histidine 9, which acts as the Tele-phosphohistidine intermediate. The Proton donor/acceptor role is filled by glutamate 87.

Belongs to the phosphoglycerate mutase family. BPG-dependent PGAM subfamily.

The catalysed reaction is (2R)-2-phosphoglycerate = (2R)-3-phosphoglycerate. It functions in the pathway carbohydrate degradation; glycolysis; pyruvate from D-glyceraldehyde 3-phosphate: step 3/5. In terms of biological role, catalyzes the interconversion of 2-phosphoglycerate and 3-phosphoglycerate. This chain is 2,3-bisphosphoglycerate-dependent phosphoglycerate mutase, found in Prosthecochloris aestuarii (strain DSM 271 / SK 413).